Reading from the N-terminus, the 147-residue chain is uncharacterized protein (147 aa).

This is an uncharacterized protein from Archaeoglobus fulgidus (strain ATCC 49558 / DSM 4304 / JCM 9628 / NBRC 100126 / VC-16).